The sequence spans 230 residues: MTALPQLISLLHLASPALPIGGFSYSQGLEAAIDCELVRDATTAERWIRDNLLHVQAQCEAPVWLLLHRAWQTQDHASVRQWNDWFHATRETSELRLETEQMGWSLAKLIAQMGWGDDASRDLLRDMRPVCLPTAFSSACVALGIAAREGLAAYLFNWAENQVAAAIKAVPLGQVAGQQMLLGLHQAVLGTVDEAVCRADAVPPLLSTFSPMLGVLSARHETQYSRLFRS.

The protein belongs to the UreF family. UreD, UreF and UreG form a complex that acts as a GTP-hydrolysis-dependent molecular chaperone, activating the urease apoprotein by helping to assemble the nickel containing metallocenter of UreC. The UreE protein probably delivers the nickel.

Its subcellular location is the cytoplasm. In terms of biological role, required for maturation of urease via the functional incorporation of the urease nickel metallocenter. The sequence is that of Urease accessory protein UreF from Cupriavidus metallidurans (strain ATCC 43123 / DSM 2839 / NBRC 102507 / CH34) (Ralstonia metallidurans).